The chain runs to 316 residues: Protease HtpX homolog (316 aa).

The chain crosses the membrane as a helical span at residues 16-36 (LFMALGFTIGGTGGAMIALVV). His130 contributes to the Zn(2+) binding site. The active site involves Glu131. His134 provides a ligand contact to Zn(2+). Transmembrane regions (helical) follow at residues 145–165 (MTAT…FFGA) and 174–194 (LATI…QMAI). Position 199 (Glu199) interacts with Zn(2+). A disordered region spans residues 285–316 (PNFAALSERRGSVSSVPRTRRRSSALDPNGRG).

It belongs to the peptidase M48B family. The cofactor is Zn(2+).

The protein localises to the cell inner membrane. The chain is Protease HtpX homolog from Rhizorhabdus wittichii (strain DSM 6014 / CCUG 31198 / JCM 15750 / NBRC 105917 / EY 4224 / RW1) (Sphingomonas wittichii).